We begin with the raw amino-acid sequence, 122 residues long: Large ribosomal subunit protein uL14c (122 aa).

Belongs to the universal ribosomal protein uL14 family. As to quaternary structure, part of the 50S ribosomal subunit.

The protein resides in the plastid. It is found in the chloroplast. In terms of biological role, binds to 23S rRNA. This Citrus sinensis (Sweet orange) protein is Large ribosomal subunit protein uL14c.